We begin with the raw amino-acid sequence, 527 residues long: NADH-ubiquinone oxidoreductase chain 5 (527 aa).

The next 14 helical transmembrane spans lie at 3–23 (ISIFLIGFVFFMGGISVWLMP), 43–63 (FYFNSILFSFILFLVTFSVLV), 75–95 (FNYYYFVLLIFVGSMFSLNFS), 98–118 (IFTMLLSWDLLGISSFFLVLF), 141–161 (FMFVFFGLSVFSGYYFLSFSM), 168–188 (LLLLLTAFTKSAQFPFSSWLP), 197–217 (VSSLVHSSTLVTAGLILLMNF), 226–246 (FISFVLIIGLFTMFFSSLASL), 263–283 (MGFSMVTLGLGLSFISFIHLV), 318–338 (LPNFIQLQMLVTLFCLCGLIF), 357–377 (YMMFFSLMFFVSVFLTFGYSF), 398–418 (VFMNFLSLVLVIFSISFLWWM), 432–452 (VDFFGPLVFLFMMIFLSFLIL), and 507–527 (YLKSLNFNSVVVLIFIFFMIC).

The protein belongs to the complex I subunit 5 family.

It localises to the mitochondrion inner membrane. It carries out the reaction a ubiquinone + NADH + 5 H(+)(in) = a ubiquinol + NAD(+) + 4 H(+)(out). Functionally, core subunit of the mitochondrial membrane respiratory chain NADH dehydrogenase (Complex I) that is believed to belong to the minimal assembly required for catalysis. Complex I functions in the transfer of electrons from NADH to the respiratory chain. The immediate electron acceptor for the enzyme is believed to be ubiquinone. The protein is NADH-ubiquinone oxidoreductase chain 5 of Caenorhabditis elegans.